Consider the following 26-residue polypeptide: MTATILVADDDAAIRTVLNQALSRAG.

The 23-residue stretch at 4-26 (TILVADDDAAIRTVLNQALSRAG) folds into the Response regulatory domain.

Phosphorylated and dephosphorylated by NtrB.

The protein localises to the cytoplasm. Functionally, member of the two-component regulatory system NtrB/NtrC, which controls expression of the nitrogen-regulated (ntr) genes in response to nitrogen limitation. Phosphorylated NtrC binds directly to DNA and stimulates the formation of open promoter-sigma54-RNA polymerase complexes. The chain is DNA-binding transcriptional regulator NtrC (ntrC) from Rhizobium leguminosarum bv. phaseoli.